The following is a 234-amino-acid chain: Uridylate kinase (234 aa).

9–12 provides a ligand contact to ATP; it reads KLSG. G51 serves as a coordination point for UMP. Residues G52 and R56 each contribute to the ATP site. Residues D71 and 132–139 each bind UMP; that span reads CGNPFFTT. ATP-binding residues include T159, Y165, and D168.

This sequence belongs to the UMP kinase family. Homohexamer.

Its subcellular location is the cytoplasm. The catalysed reaction is UMP + ATP = UDP + ADP. It participates in pyrimidine metabolism; CTP biosynthesis via de novo pathway; UDP from UMP (UMPK route): step 1/1. Inhibited by UTP. In terms of biological role, catalyzes the reversible phosphorylation of UMP to UDP. This is Uridylate kinase from Prochlorococcus marinus (strain MIT 9312).